Here is a 270-residue protein sequence, read N- to C-terminus: Phosphate import ATP-binding protein PstB 2 (270 aa).

In terms of domain architecture, ABC transporter spans 25–265 (LQAKDINIYY…PEKKQTEDYI (241 aa)). Residue 57–64 (GPSGCGKS) participates in ATP binding.

This sequence belongs to the ABC transporter superfamily. Phosphate importer (TC 3.A.1.7) family. In terms of assembly, the complex is composed of two ATP-binding proteins (PstB), two transmembrane proteins (PstC and PstA) and a solute-binding protein (PstS).

It localises to the cell membrane. It catalyses the reaction phosphate(out) + ATP + H2O = ADP + 2 phosphate(in) + H(+). Functionally, part of the ABC transporter complex PstSACB involved in phosphate import. Responsible for energy coupling to the transport system. The chain is Phosphate import ATP-binding protein PstB 2 from Shouchella clausii (strain KSM-K16) (Alkalihalobacillus clausii).